Consider the following 339-residue polypeptide: NADH-quinone oxidoreductase subunit H (339 aa).

A run of 9 helical transmembrane segments spans residues 10–30 (FPLI…ILCV), 50–70 (PNVV…KLLF), 82–102 (ILFI…WAVV), 115–135 (VGVL…IIAG), 161–181 (MGLV…SGII), 187–207 (IPWW…ISVL), 235–255 (MGFA…SAMT), 275–295 (IPGF…FLWI), and 310–330 (LGWK…SSVL).

Belongs to the complex I subunit 1 family. NDH-1 is composed of 14 different subunits. Subunits NuoA, H, J, K, L, M, N constitute the membrane sector of the complex.

Its subcellular location is the cell inner membrane. It catalyses the reaction a quinone + NADH + 5 H(+)(in) = a quinol + NAD(+) + 4 H(+)(out). Functionally, NDH-1 shuttles electrons from NADH, via FMN and iron-sulfur (Fe-S) centers, to quinones in the respiratory chain. The immediate electron acceptor for the enzyme in this species is believed to be ubiquinone. Couples the redox reaction to proton translocation (for every two electrons transferred, four hydrogen ions are translocated across the cytoplasmic membrane), and thus conserves the redox energy in a proton gradient. This subunit may bind ubiquinone. The protein is NADH-quinone oxidoreductase subunit H of Rickettsia canadensis (strain McKiel).